A 376-amino-acid polypeptide reads, in one-letter code: Erythronate-4-phosphate dehydrogenase (376 aa).

Residues S45 and T67 each coordinate substrate. Residues 127–128 (QV), D147, and T176 each bind NAD(+). The active site involves R209. Position 233 (D233) interacts with NAD(+). The active site involves E238. H255 serves as the catalytic Proton donor. G258 lines the NAD(+) pocket. Residue Y259 coordinates substrate.

It belongs to the D-isomer specific 2-hydroxyacid dehydrogenase family. PdxB subfamily. In terms of assembly, homodimer.

It is found in the cytoplasm. The enzyme catalyses 4-phospho-D-erythronate + NAD(+) = (R)-3-hydroxy-2-oxo-4-phosphooxybutanoate + NADH + H(+). Its pathway is cofactor biosynthesis; pyridoxine 5'-phosphate biosynthesis; pyridoxine 5'-phosphate from D-erythrose 4-phosphate: step 2/5. Its function is as follows. Catalyzes the oxidation of erythronate-4-phosphate to 3-hydroxy-2-oxo-4-phosphonooxybutanoate. This is Erythronate-4-phosphate dehydrogenase from Aliivibrio salmonicida (strain LFI1238) (Vibrio salmonicida (strain LFI1238)).